The chain runs to 427 residues: Septin-8-B (427 aa).

In terms of domain architecture, Septin-type G spans 39-305 (QGFCFNILCV…ELYRRCKLEE (267 aa)). Positions 49-56 (GETGIGKS) are G1 motif. Residues 49 to 56 (GETGIGKS), G104, 185 to 193 (KADTISKSE), G239, and R254 each bind GTP. Residues 101-104 (DTVG) form a G3 motif region. The segment at 184–187 (AKAD) is G4 motif. The stretch at 320–407 (LQETYEAKRK…RRKVAMETLQ (88 aa)) forms a coiled coil. Over residues 406–418 (LQSQSFQATSQQP) the composition is skewed to polar residues. The interval 406-427 (LQSQSFQATSQQPLKKDKDRKN) is disordered.

It belongs to the TRAFAC class TrmE-Era-EngA-EngB-Septin-like GTPase superfamily. Septin GTPase family.

The sequence is that of Septin-8-B (sept8-b) from Xenopus laevis (African clawed frog).